The sequence spans 747 residues: Protein neuralized (747 aa).

One can recognise an NHR 1 domain in the interval 97 to 251 (PLQFHTVHGD…NCTGIEFLDA (155 aa)). Residues 280-292 (LPQQQQQLPQQQL) show a composition bias toward low complexity. The disordered stretch occupies residues 280-309 (LPQQQQQLPQQQLTAHHPLQQSRRSLPGGT). The NHR 2 domain maps to 359-514 (PVPFHITKGR…STQSLRMFRQ (156 aa)). The RING-type zinc finger occupies 694 to 735 (CTICYENPIDSVLYMCGHMCMCYDCAIEQWRGVGGGQCPLCR).

Its subcellular location is the nucleus. Functionally, involved in neurogenesis. Interacts with other neurogenic proteins in the specification of the neuroblast versus epidermoblast cell fate. The sequence is that of Protein neuralized (neur) from Drosophila virilis (Fruit fly).